The chain runs to 231 residues: Ribonuclease 3 (231 aa).

The 134-residue stretch at 1–134 (MKTLEKKLAE…FLGALLLDAG (134 aa)) folds into the RNase III domain. Glutamate 47 contacts Mg(2+). Residue aspartate 51 is part of the active site. Mg(2+)-binding residues include aspartate 120 and glutamate 123. The active site involves glutamate 123. Residues 160–229 (DYKTALQELL…AKNALEKLQR (70 aa)) form the DRBM domain.

The protein belongs to the ribonuclease III family. Homodimer. The cofactor is Mg(2+).

The protein localises to the cytoplasm. The catalysed reaction is Endonucleolytic cleavage to 5'-phosphomonoester.. In terms of biological role, digests double-stranded RNA. Involved in the processing of primary rRNA transcript to yield the immediate precursors to the large and small rRNAs (23S and 16S). Also processes some mRNAs, and tRNAs when they are encoded in the rRNA operon. CRISPR (clustered regularly interspaced short palindromic repeat) is an adaptive immune system that provides protection against mobile genetic elements (viruses, transposable elements and conjugative plasmids). CRISPR clusters contain spacers, sequences complementary to antecedent mobile elements, and target invading nucleic acids. CRISPR clusters are transcribed and processed into CRISPR RNA (crRNA). In this organism endogenous ribonuclease 3 and Cas9 are required for correct coprocessing of pre-crRNA and the trans-encoded small RNA (tracrRNA). Cas9, crRNA and tracrRNA are required for cleavage of invading DNA. Complements pre-crRNA and tracrRNA coprocessing defects in an rnc deletion in S.pyogenes strain 370. This chain is Ribonuclease 3, found in Streptococcus mutans serotype c (strain ATCC 700610 / UA159).